The chain runs to 297 residues: Undecaprenyl-diphosphatase (297 aa).

7 consecutive transmembrane segments (helical) span residues 58–78, 103–123, 138–158, 168–188, 208–228, 243–263, and 274–294; these read PGVA…LSYF, AQMG…GLLI, LAAI…AEQL, LRLA…IPGV, AARF…LVEL, VLAI…AWLL, and FVVY…TGTL.

It belongs to the UppP family.

The protein resides in the cell inner membrane. The enzyme catalyses di-trans,octa-cis-undecaprenyl diphosphate + H2O = di-trans,octa-cis-undecaprenyl phosphate + phosphate + H(+). Its function is as follows. Catalyzes the dephosphorylation of undecaprenyl diphosphate (UPP). Confers resistance to bacitracin. In Synechococcus sp. (strain ATCC 27144 / PCC 6301 / SAUG 1402/1) (Anacystis nidulans), this protein is Undecaprenyl-diphosphatase.